We begin with the raw amino-acid sequence, 631 residues long: Iron transport multicopper oxidase FET3 (631 aa).

The N-terminal stretch at M1–A25 is a signal peptide. Over A26 to K564 the chain is Extracellular. N-linked (GlcNAc...) asparagine glycans are attached at residues N31 and N81. Plastocyanin-like domains lie at I50–E148 and N195–N297. Positions 85 and 87 each coordinate Cu cation. N92 and N117 each carry an N-linked (GlcNAc...) asparagine glycan. Positions 130 and 132 each coordinate Cu cation. 7 N-linked (GlcNAc...) asparagine glycosylation sites follow: N199, N203, N249, N270, N297, N364, and N413. Positions N387–A506 constitute a Plastocyanin-like 3 domain. Positions 418, 421, 423, 488, 489, 490, and 494 each coordinate Cu cation. Residues G565–T585 traverse the membrane as a helical segment. The Cytoplasmic portion of the chain corresponds to Y586–I630. The tract at residues E610–E631 is disordered. Residues D622–E631 show a composition bias toward basic and acidic residues.

Belongs to the multicopper oxidase family. Cu cation serves as cofactor.

The protein localises to the cell membrane. Its function is as follows. Iron transport multicopper ferroxidase required for Fe(2+) high affinity uptake. Required to oxidize Fe(2+) and release it from the transporter. Essential component of copper-dependent iron transport. The polypeptide is Iron transport multicopper oxidase FET3 (FET3) (Kluyveromyces lactis (strain ATCC 8585 / CBS 2359 / DSM 70799 / NBRC 1267 / NRRL Y-1140 / WM37) (Yeast)).